The sequence spans 527 residues: Calcium and calcium/calmodulin-dependent serine/threonine-protein kinase (527 aa).

Residues 12-314 (YEVSEILGRG…AQELLSDPWV (303 aa)) enclose the Protein kinase domain. Residue 18-26 (LGRGGFSVV) participates in ATP binding. The segment at 25–51 (VVRKGTRKSNNDDEKSQSQSKSQSQSQ) is disordered. The segment covering 41-51 (QSQSKSQSQSQ) has biased composition (low complexity). Lys-55 contacts ATP. The tract at residues 59-78 (RLGTSNNLPRKKDGGENSTE) is disordered. Residue Asp-179 is the Proton acceptor of the active site. The chain crosses the membrane as a helical span at residues 239-255 (MWSLGVILYILLSGYPP). Thr-279 carries the post-translational modification Phosphothreonine. Residues 337-350 (ARRKLRAAAIASVW) form a calmodulin-binding region. Residues 358–379 (TKKLKSLVGSYDLKEDEIENLR) are a coiled coil. 3 EF-hand domains span residues 408–443 (SLIP…LKNS), 444–479 (KGED…LPYD), and 486–521 (TEPG…DSSL). Ca(2+)-binding residues include Asp-421, Asn-423, Asp-425, Thr-427, Glu-432, Asp-457, Asp-459, Ser-461, Cys-463, Glu-468, Asp-499, Asn-501, Asp-503, Lys-505, and Glu-510.

It belongs to the protein kinase superfamily. CAMK Ser/Thr protein kinase family. CaMK subfamily. Post-translationally, autophosphorylation.

It is found in the membrane. The enzyme catalyses L-seryl-[protein] + ATP = O-phospho-L-seryl-[protein] + ADP + H(+). It carries out the reaction L-threonyl-[protein] + ATP = O-phospho-L-threonyl-[protein] + ADP + H(+). Its activity is regulated as follows. Activated by calcium. Autophosphorylation may play an important role in the regulation of the kinase activity. Protein kinase that recognizes the calcium spiking induced by Nod factors and translates this signal to components controlling nodulation and mycorrhizal infection responses. The polypeptide is Calcium and calcium/calmodulin-dependent serine/threonine-protein kinase (SYM9) (Pisum sativum (Garden pea)).